The chain runs to 86 residues: U1-theraphotoxin-Pc1a (86 aa).

The N-terminal stretch at 1-21 (MMRVLIVTAVFTFFLVLTSSG) is a signal peptide. A propeptide spanning residues 22–49 (HDEDNEQRNILEGMFLDRAIETPKGLEE) is cleaved from the precursor. 3 cysteine pairs are disulfide-bonded: cysteine 53–cysteine 70, cysteine 60–cysteine 75, and cysteine 69–cysteine 80. Valine amide is present on valine 84.

As to expression, expressed by the venom gland.

The protein localises to the secreted. In terms of biological role, possesses strong antiplasmodial activity against the intra-erythrocyte stage of P.falciparum in vitro. IC(50) for inhibiting P.falciparum growth is 1.59 uM. Interacts with infected and healthy erythrocytes. Does not lyse erythrocytes, is not cytotoxic to nucleated mammalian cells, and does not inhibit neuromuscular function. Has neither antibacterial nor antifungal activity. In Psalmopoeus cambridgei (Trinidad chevron tarantula), this protein is U1-theraphotoxin-Pc1a.